Reading from the N-terminus, the 242-residue chain is Segregation and condensation protein A (242 aa).

It belongs to the ScpA family. As to quaternary structure, component of a cohesin-like complex composed of ScpA, ScpB and the Smc homodimer, in which ScpA and ScpB bind to the head domain of Smc. The presence of the three proteins is required for the association of the complex with DNA.

The protein resides in the cytoplasm. In terms of biological role, participates in chromosomal partition during cell division. May act via the formation of a condensin-like complex containing Smc and ScpB that pull DNA away from mid-cell into both cell halves. The chain is Segregation and condensation protein A from Streptococcus pneumoniae (strain Taiwan19F-14).